The sequence spans 152 residues: UPF0225 protein KPK_2103 (152 aa).

This sequence belongs to the UPF0225 family.

The chain is UPF0225 protein KPK_2103 from Klebsiella pneumoniae (strain 342).